A 290-amino-acid chain; its full sequence is UPF0750 membrane protein YpjC (290 aa).

Helical transmembrane passes span 9 to 29 (NIFF…HFNM), 47 to 67 (ALFH…IFFI), 75 to 95 (TMFV…SIFQ), 106 to 126 (DLAL…GIIF), 146 to 166 (FGIP…ILSL), and 179 to 199 (LVAV…GYAA).

Belongs to the UPF0750 family.

It localises to the cell membrane. This is UPF0750 membrane protein YpjC (ypjC) from Bacillus subtilis (strain 168).